A 318-amino-acid chain; its full sequence is Fibronectin type III domain-containing protein 11 (318 aa).

The region spanning 210–307 is the Fibronectin type-III domain; that stretch reads VVFDRKASAA…DSLTLHTKPE (98 aa).

This is Fibronectin type III domain-containing protein 11 (FNDC11) from Homo sapiens (Human).